Reading from the N-terminus, the 264-residue chain is Cell division protein FtsQ (264 aa).

Residues M1–R24 form a disordered region. The Cytoplasmic portion of the chain corresponds to M1 to T32. The chain crosses the membrane as a helical span at residues I33 to G53. Residues S54–S264 lie on the Extracellular side of the membrane. The POTRA domain occupies T57–R126.

This sequence belongs to the FtsQ/DivIB family. FtsQ subfamily.

The protein localises to the cell membrane. Its function is as follows. Essential cell division protein. The chain is Cell division protein FtsQ from Streptomyces coelicolor (strain ATCC BAA-471 / A3(2) / M145).